We begin with the raw amino-acid sequence, 554 residues long: Urocanate hydratase (554 aa).

NAD(+) contacts are provided by residues 51-52, glutamine 129, 175-177, glutamate 195, arginine 200, 241-242, 262-266, 272-273, and tyrosine 321; these read GG, GMG, NA, QTSAH, and YL. Cysteine 409 is a catalytic residue. Position 491 (glycine 491) interacts with NAD(+).

It belongs to the urocanase family. It depends on NAD(+) as a cofactor.

The protein localises to the cytoplasm. It catalyses the reaction 4-imidazolone-5-propanoate = trans-urocanate + H2O. It participates in amino-acid degradation; L-histidine degradation into L-glutamate; N-formimidoyl-L-glutamate from L-histidine: step 2/3. Functionally, catalyzes the conversion of urocanate to 4-imidazolone-5-propionate. This chain is Urocanate hydratase, found in Caulobacter sp. (strain K31).